The primary structure comprises 432 residues: CLOCK-interacting pacemaker (432 aa).

Disordered regions lie at residues 71–98 and 194–315; these read ADSD…SEDM and SYTK…SSPL. Ser-246 bears the Phosphoserine mark. Positions 272–283 are enriched in polar residues; the sequence is SPQTLQPVSSSH. The stretch at 364–395 forms a coiled coil; sequence EITLKTKELIRQNQATQAELDQLKEQTQMFIE. The tract at residues 408 to 432 is disordered; that stretch reads LQASLTSGSSHSGSDLDTLSDHPDV. Over residues 411 to 424 the composition is skewed to low complexity; that stretch reads SLTSGSSHSGSDLD.

Interacts with CLOCK. Forms a ternary complex with the CLOCK-BMAL1 heterodimer. Interacts with CAD and HSPA5. As to expression, expressed in the heart, kidney and liver and shows a circadian oscillation in these tissues with a peak at circadian time 14 hours (at protein level). Expressed in the brain, including the suprachiasmatic nucleus (SCN) of the brain, and in multiple peripheral tissues such as heart, liver and kidney. Exhibits a circadian oscillation in the peripheral tissues with a peak at circadian time 14 hours.

Its subcellular location is the nucleus. The protein localises to the cytoplasm. It is found in the cytosol. Transcriptional repressor which may act as a negative-feedback regulator of CLOCK-BMAL1 transcriptional activity in the circadian-clock mechanism. May stimulate BMAL1-dependent phosphorylation of CLOCK. However, the physiological relevance of these observations is unsure, since experiments in knockout mice showed that CIPC is not critially required for basic circadian clock. The chain is CLOCK-interacting pacemaker (Cipc) from Mus musculus (Mouse).